The following is a 422-amino-acid chain: MPVLAALLRRGPLLQRRVQEIRYAERSYVSKPTLNEVVIVSAIRTPIGSFLGSLSSLPATKLGSIAIQGAIEKAGIPKEEVKEAYMGNVLQGGEGQAPTRQAVLGAGLPISTPCTTINKVCASGMKAIMMASQNLMCGHQDVMVAGGMESMSNVPYVMNRGATPYGGVKLEDLIVKDGLTDVYNKIHMGNCAENTAKKLNITREEQDTYALNSYTRSKAAWEAGRFGNEVVPVTITVKGKPDVVVKEDEEYKRVDFSKIPKLKTVFQRENGTVTAANASTLNDGAAAVVLMTADAAKRLNVKPLARIAAFADAAVEPIDFPLAPAYAVPKVLKDAGLKKEDITMWEVNEAFSVVVLANIKMLEMDPQKVNINGGAVSLGHPIGMSGARIVVHLAHALKQGEYGLASICNGGGGASAMLIQKL.

A mitochondrion-targeting transit peptide spans methionine 1 to tyrosine 28. Lysine 61 bears the N6-acetyllysine; alternate mark. Lysine 61 is modified (N6-succinyllysine; alternate). Lysine 73 is modified (N6-succinyllysine). The Acyl-thioester intermediate role is filled by cysteine 121. N6-acetyllysine; alternate occurs at positions 169, 176, 185, and 197. Residues lysine 169, lysine 176, lysine 185, and lysine 197 each carry the N6-succinyllysine; alternate modification. Tyrosine 214 provides a ligand contact to CoA. Tyrosine 214 contacts K(+). Lysine 218 carries the N6-acetyllysine; alternate modification. Lysine 218 carries the post-translational modification N6-succinyllysine; alternate. Position 238 is an N6-succinyllysine (lysine 238). At lysine 240 the chain carries N6-acetyllysine; alternate. Lysine 240 bears the N6-succinyllysine; alternate mark. Residues lysine 246 and lysine 252 each carry the N6-acetyllysine modification. CoA contacts are provided by residues arginine 253–aspartate 255 and lysine 258. At lysine 258 the chain carries N6-acetyllysine; alternate. Lysine 258 carries the post-translational modification N6-succinyllysine; alternate. N6-succinyllysine is present on residues lysine 261 and lysine 263. Residues alanine 275, alanine 276, and alanine 278 each contribute to the K(+) site. Residue serine 279 participates in CoA binding. Lysine 333 carries the post-translational modification N6-acetyllysine. Position 376 (valine 376) interacts with K(+). Cysteine 408 acts as the Proton donor/acceptor in catalysis.

This sequence belongs to the thiolase-like superfamily. Thiolase family. In terms of assembly, homotetramer. Post-translationally, succinylation at Lys-263, adjacent to a coenzyme A binding site. Desuccinylated by SIRT5.

Its subcellular location is the mitochondrion. It catalyses the reaction 2 acetyl-CoA = acetoacetyl-CoA + CoA. It carries out the reaction propanoyl-CoA + acetyl-CoA = 2-methyl-3-oxobutanoyl-CoA + CoA. It functions in the pathway lipid metabolism; fatty acid beta-oxidation. Activated by potassium ions, but not sodium ions. Its function is as follows. This is one of the enzymes that catalyzes the last step of the mitochondrial beta-oxidation pathway, an aerobic process breaking down fatty acids into acetyl-CoA. Using free coenzyme A/CoA, catalyzes the thiolytic cleavage of medium- to long-chain 3-oxoacyl-CoAs into acetyl-CoA and a fatty acyl-CoA shortened by two carbon atoms. The activity of the enzyme is reversible and it can also catalyze the condensation of two acetyl-CoA molecules into acetoacetyl-CoA. Thereby, it plays a major role in ketone body metabolism. In Bos taurus (Bovine), this protein is Acetyl-CoA acetyltransferase, mitochondrial (ACAT1).